The sequence spans 203 residues: Chemotactic transduction protein ChpE (203 aa).

The next 5 membrane-spanning stretches (helical) occupy residues 3–23 (AIFL…GAVF), 46–66 (LIGD…LLGY), 69–89 (VRIP…VQGL), 123–143 (NVVY…GTPN), and 149–169 (VFFA…AALV).

It belongs to the Rht family.

The protein resides in the cell membrane. The chain is Chemotactic transduction protein ChpE (chpE) from Pseudomonas aeruginosa (strain ATCC 15692 / DSM 22644 / CIP 104116 / JCM 14847 / LMG 12228 / 1C / PRS 101 / PAO1).